A 316-amino-acid chain; its full sequence is Pantothenate kinase (316 aa).

95–102 (GSVAVGKS) provides a ligand contact to ATP.

Belongs to the prokaryotic pantothenate kinase family.

It is found in the cytoplasm. It carries out the reaction (R)-pantothenate + ATP = (R)-4'-phosphopantothenate + ADP + H(+). It functions in the pathway cofactor biosynthesis; coenzyme A biosynthesis; CoA from (R)-pantothenate: step 1/5. In Klebsiella pneumoniae subsp. pneumoniae (strain ATCC 700721 / MGH 78578), this protein is Pantothenate kinase.